We begin with the raw amino-acid sequence, 337 residues long: Cysteine synthase 3 (337 aa).

Lys-47 carries the N6-(pyridoxal phosphate)lysine modification. Pyridoxal 5'-phosphate-binding positions include Asn-78, 182–186 (GSSGT), and Ser-270.

Belongs to the cysteine synthase/cystathionine beta-synthase family. As to quaternary structure, homodimer. The cofactor is pyridoxal 5'-phosphate.

The enzyme catalyses O-acetyl-L-serine + hydrogen sulfide = L-cysteine + acetate. It participates in amino-acid biosynthesis; L-cysteine biosynthesis; L-cysteine from L-serine: step 2/2. Functionally, primarily catalyzes the formation of cysteine and acetate from O-acetylserine and hydrogen sulfide. Can also catalyze the formation of cysteine and acetate from S-sulfocysteine and hydrogen sulfide and the formation of cyanoalanine and hydrogen sulfide from either S-sulfocysteine or O-acetylserine and hydrogen cyanide. The sequence is that of Cysteine synthase 3 from Caenorhabditis elegans.